We begin with the raw amino-acid sequence, 152 residues long: UPF0225 protein YchJ (152 aa).

This sequence belongs to the UPF0225 family.

This Escherichia coli O139:H28 (strain E24377A / ETEC) protein is UPF0225 protein YchJ.